We begin with the raw amino-acid sequence, 222 residues long: Large ribosomal subunit protein mL64 (222 aa).

Disordered stretches follow at residues 1 to 51 (MAAP…PRWQ), 136 to 170 (RRQQQARREKAQADKERRARLQAEAQERLGYHVDP), and 182 to 222 (LEKQ…TPDS). Residues 141-170 (ARREKAQADKERRARLQAEAQERLGYHVDP) are compositionally biased toward basic and acidic residues. Residues 144 to 213 (EKAQADKERR…AAMAAAAAQD (70 aa)) adopt a coiled-coil conformation. The short motif at 184–200 (KQHRKRLKEEKQRKKKE) is the Nuclear localization signal element. A compositionally biased stretch (low complexity) spans 203-212 (AAAMAAAAAQ).

This sequence belongs to the mitochondrion-specific ribosomal protein mL64 family. As to quaternary structure, component of the mitochondrial ribosome large subunit (39S) which comprises a 16S rRNA and about 50 distinct proteins. Interacts with GADD45A, GADD45B and GADD45G. Interacts with NR4A1 via the NR4A1 AB domain. Interacts with ATAD3A and ATAD3B.

Its subcellular location is the mitochondrion. The protein localises to the nucleus. Acts as a negative regulator of G1 to S cell cycle phase progression by inhibiting cyclin-dependent kinases. Inhibitory effects are additive with GADD45 proteins but also occur in the absence of GADD45 proteins. Acts as a repressor of the orphan nuclear receptor NR4A1 by inhibiting AB domain-mediated transcriptional activity. May be involved in the hormone-mediated regulation of NR4A1 transcriptional activity. May play a role in mitochondrial protein synthesis. In Bos taurus (Bovine), this protein is Large ribosomal subunit protein mL64 (GADD45GIP1).